A 431-amino-acid chain; its full sequence is 5-methylthioadenosine/S-adenosylhomocysteine deaminase (431 aa).

Positions 61 and 63 each coordinate Zn(2+). The substrate site is built by E90 and H183. H210 contributes to the Zn(2+) binding site. 2 residues coordinate substrate: E213 and D298. D298 contacts Zn(2+).

Belongs to the metallo-dependent hydrolases superfamily. MTA/SAH deaminase family. It depends on Zn(2+) as a cofactor.

It carries out the reaction S-adenosyl-L-homocysteine + H2O + H(+) = S-inosyl-L-homocysteine + NH4(+). The enzyme catalyses S-methyl-5'-thioadenosine + H2O + H(+) = S-methyl-5'-thioinosine + NH4(+). In terms of biological role, catalyzes the deamination of 5-methylthioadenosine and S-adenosyl-L-homocysteine into 5-methylthioinosine and S-inosyl-L-homocysteine, respectively. Is also able to deaminate adenosine. The chain is 5-methylthioadenosine/S-adenosylhomocysteine deaminase from Halobacterium salinarum (strain ATCC 700922 / JCM 11081 / NRC-1) (Halobacterium halobium).